The chain runs to 129 residues: Small ribosomal subunit protein uS11 (129 aa).

This sequence belongs to the universal ribosomal protein uS11 family. Part of the 30S ribosomal subunit. Interacts with proteins S7 and S18. Binds to IF-3.

In terms of biological role, located on the platform of the 30S subunit, it bridges several disparate RNA helices of the 16S rRNA. Forms part of the Shine-Dalgarno cleft in the 70S ribosome. This is Small ribosomal subunit protein uS11 from Escherichia fergusonii (strain ATCC 35469 / DSM 13698 / CCUG 18766 / IAM 14443 / JCM 21226 / LMG 7866 / NBRC 102419 / NCTC 12128 / CDC 0568-73).